The sequence spans 420 residues: Cell division protein FtsA (420 aa).

This sequence belongs to the FtsA/MreB family. As to quaternary structure, self-interacts. Interacts with FtsZ.

Its subcellular location is the cell inner membrane. Cell division protein that is involved in the assembly of the Z ring. May serve as a membrane anchor for the Z ring. This Escherichia coli O157:H7 protein is Cell division protein FtsA.